The sequence spans 478 residues: Leukotoxin secretion protein D (478 aa).

The Cytoplasmic segment spans residues 1-59; the sequence is MKIWLSGIYEFFLRYKNTWAEVWKIRKELDHPNRKKDESEFLPAHLDLIETPVSKKPRL. Residues 60–80 traverse the membrane as a helical segment; it reads IAYLIMLFLVVAIVLASVSKV. The Periplasmic segment spans residues 81–478; it reads EIVATAPGKL…ESVTESLRER (398 aa).

The protein belongs to the membrane fusion protein (MFP) (TC 8.A.1) family.

Its subcellular location is the cell inner membrane. Involved in the transport of the Leukotoxin. The sequence is that of Leukotoxin secretion protein D (lktD) from Mannheimia haemolytica (Pasteurella haemolytica).